We begin with the raw amino-acid sequence, 339 residues long: Alpha-ketoglutarate-dependent dioxygenase btcD (339 aa).

Residue histidine 96 coordinates substrate. Fe cation contacts are provided by histidine 140 and aspartate 142. Threonine 173 contributes to the 2-oxoglutarate binding site. Residues 207 to 230 (DGSDPKFQVPRGSPANVGTNLRPT) form a disordered region. Residue histidine 302 coordinates Fe cation. The 2-oxoglutarate site is built by arginine 314 and arginine 318. Arginine 318 lines the substrate pocket.

It belongs to the TfdA dioxygenase family. It depends on Fe(2+) as a cofactor.

Its pathway is secondary metabolite biosynthesis; terpenoid biosynthesis. Its function is as follows. Alpha-ketoglutarate-dependent dioxygenase; part of the gene cluster that mediates the biosynthesis of betaestacins. The bifunctional terpene synthase btcA converts isopentenyl diphosphate (IPP) and dimethylallyl diphosphate (DMAPP) into the sesterterpene betaestacin I. The C-terminal prenyltransferase (PT) domain of btcA catalyzes formation of GFPP, whereas the N-terminal terpene cyclase (TC) domain catalyzes the cyclization of GFPP into betaestacin I. The cytochrome P450 monooxygenase btcB is then responsible for the six-step oxidation of betaestacin I to yield betaestacin II. The roles of the cytochrome P450 monooxygenase btcC and the alpha-ketoglutarate-dependent dioxygenase btcD have not been identified yet. This chain is Alpha-ketoglutarate-dependent dioxygenase btcD, found in Neocamarosporium betae (Beet black rot fungus).